The sequence spans 214 residues: Protein-L-isoaspartate O-methyltransferase (214 aa).

The active site involves serine 63.

The protein belongs to the methyltransferase superfamily. L-isoaspartyl/D-aspartyl protein methyltransferase family.

The protein localises to the cytoplasm. The enzyme catalyses [protein]-L-isoaspartate + S-adenosyl-L-methionine = [protein]-L-isoaspartate alpha-methyl ester + S-adenosyl-L-homocysteine. Its function is as follows. Catalyzes the methyl esterification of L-isoaspartyl residues in peptides and proteins that result from spontaneous decomposition of normal L-aspartyl and L-asparaginyl residues. It plays a role in the repair and/or degradation of damaged proteins. This is Protein-L-isoaspartate O-methyltransferase from Maridesulfovibrio salexigens (strain ATCC 14822 / DSM 2638 / NCIMB 8403 / VKM B-1763) (Desulfovibrio salexigens).